The following is a 469-amino-acid chain: UDP-N-acetylmuramoylalanine--D-glutamate ligase (469 aa).

Residue 125–131 (GTNGKTT) participates in ATP binding.

Belongs to the MurCDEF family.

The protein localises to the cytoplasm. It catalyses the reaction UDP-N-acetyl-alpha-D-muramoyl-L-alanine + D-glutamate + ATP = UDP-N-acetyl-alpha-D-muramoyl-L-alanyl-D-glutamate + ADP + phosphate + H(+). Its pathway is cell wall biogenesis; peptidoglycan biosynthesis. Its function is as follows. Cell wall formation. Catalyzes the addition of glutamate to the nucleotide precursor UDP-N-acetylmuramoyl-L-alanine (UMA). This Prochlorococcus marinus (strain NATL2A) protein is UDP-N-acetylmuramoylalanine--D-glutamate ligase.